The sequence spans 269 residues: Lck-interacting transmembrane adapter 1 (269 aa).

Over methionine 1–serine 7 the chain is Extracellular. A helical; Signal-anchor for type III membrane protein membrane pass occupies residues alanine 8 to cysteine 28. 2 S-palmitoyl cysteine lipidation sites follow: cysteine 28 and cysteine 31. Topologically, residues threonine 29 to leucine 269 are cytoplasmic. The interval serine 102 to serine 133 is disordered. The segment covering arginine 115 to alanine 124 has biased composition (pro residues). Phosphotyrosine occurs at positions 137, 175, and 207. Positions tyrosine 137–valine 140 are interaction with GRB2. 2 interaction with CSK regions span residues tyrosine 175–isoleucine 178 and tyrosine 207–valine 210. Tyrosine 242 and tyrosine 261 each carry phosphotyrosine; by LYN or LCK. An interaction with LCK and PIK3R1 region spans residues tyrosine 242–isoleucine 245. The interval tyrosine 261–isoleucine 264 is interaction with LCK, PLCG2 and PIK3R1. Serine 263 is modified (phosphoserine).

As to quaternary structure, when phosphorylated in response to TCR stimulation and/or CD4 costimulation, interacts with LCK, CSK, FYN, PTPN11/SHP2, GRB2, PIK3R1 and GRAP2. When phosphorylated in response to BCR activation, interacts with LYN, PIK3R1, PLCG2 and GRB2. Post-translationally, palmitoylation of Cys-28 and Cys-31 is required for raft targeting. Phosphorylated on tyrosines upon TCR activation and/or CD4 coreceptor stimulation, or upon BCR stimulation; which leads to the recruitment of SH2-containing proteins. In terms of tissue distribution, expressed in spleen and lung. Present in primary B-cells and peripheral T-cells (at protein level).

The protein localises to the cell membrane. Its function is as follows. Involved in BCR (B-cell antigen receptor)-mediated signaling in B-cells and TCR (T-cell antigen receptor)-mediated T-cell signaling in T-cells. In absence of TCR signaling, may be involved in CD4-mediated inhibition of T-cell activation. Couples activation of these receptors and their associated kinases with distal intracellular events such as calcium mobilization or MAPK activation through the recruitment of PLCG2, GRB2, GRAP2, and other signaling molecules. This chain is Lck-interacting transmembrane adapter 1 (Lime1), found in Mus musculus (Mouse).